The chain runs to 191 residues: A-type ATP synthase subunit E (191 aa).

The protein belongs to the V-ATPase E subunit family. In terms of assembly, has multiple subunits with at least A(3), B(3), C, D, E, F, H, I and proteolipid K(x). Post-translationally, the N-terminus is blocked.

The protein resides in the cell membrane. In terms of biological role, component of the A-type ATP synthase that produces ATP from ADP in the presence of a proton gradient across the membrane. This is A-type ATP synthase subunit E from Sulfurisphaera tokodaii (strain DSM 16993 / JCM 10545 / NBRC 100140 / 7) (Sulfolobus tokodaii).